The sequence spans 243 residues: Cell division protein ZipA (243 aa).

The Periplasmic portion of the chain corresponds to M1–V4. Residues T5–F25 form a helical membrane-spanning segment. At S26–W243 the chain is on the cytoplasmic side. Positions A32–K89 are disordered. Residues K38 to P49 are compositionally biased toward basic and acidic residues.

This sequence belongs to the ZipA family. As to quaternary structure, interacts with FtsZ via their C-terminal domains.

The protein resides in the cell inner membrane. Functionally, essential cell division protein that stabilizes the FtsZ protofilaments by cross-linking them and that serves as a cytoplasmic membrane anchor for the Z ring. Also required for the recruitment to the septal ring of downstream cell division proteins. The protein is Cell division protein ZipA of Xylella fastidiosa (strain 9a5c).